The following is a 196-amino-acid chain: Ribonuclease HII (196 aa).

An RNase H type-2 domain is found at 4–196 (IWVCGVDEAG…PVRRVLEGSF (193 aa)). 3 residues coordinate a divalent metal cation: D10, E11, and D106.

Belongs to the RNase HII family. Mn(2+) serves as cofactor. Mg(2+) is required as a cofactor.

It is found in the cytoplasm. It carries out the reaction Endonucleolytic cleavage to 5'-phosphomonoester.. In terms of biological role, endonuclease that specifically degrades the RNA of RNA-DNA hybrids. The polypeptide is Ribonuclease HII (Polynucleobacter asymbioticus (strain DSM 18221 / CIP 109841 / QLW-P1DMWA-1) (Polynucleobacter necessarius subsp. asymbioticus)).